Consider the following 306-residue polypeptide: Aspartate carbamoyltransferase catalytic subunit (306 aa).

Residues R55 and T56 each coordinate carbamoyl phosphate. K84 is a binding site for L-aspartate. Positions 105, 133, and 136 each coordinate carbamoyl phosphate. L-aspartate contacts are provided by R166 and R227. Carbamoyl phosphate is bound by residues L265 and P266.

Belongs to the aspartate/ornithine carbamoyltransferase superfamily. ATCase family. Heterododecamer (2C3:3R2) of six catalytic PyrB chains organized as two trimers (C3), and six regulatory PyrI chains organized as three dimers (R2).

The catalysed reaction is carbamoyl phosphate + L-aspartate = N-carbamoyl-L-aspartate + phosphate + H(+). It participates in pyrimidine metabolism; UMP biosynthesis via de novo pathway; (S)-dihydroorotate from bicarbonate: step 2/3. Functionally, catalyzes the condensation of carbamoyl phosphate and aspartate to form carbamoyl aspartate and inorganic phosphate, the committed step in the de novo pyrimidine nucleotide biosynthesis pathway. In Neisseria meningitidis serogroup C / serotype 2a (strain ATCC 700532 / DSM 15464 / FAM18), this protein is Aspartate carbamoyltransferase catalytic subunit.